The primary structure comprises 312 residues: Malate dehydrogenase (312 aa).

NAD(+) is bound by residues 7 to 13 (GAAGGIG) and Asp-34. Substrate contacts are provided by Arg-81 and Arg-87. Residues Asn-94 and 117–119 (ITN) contribute to the NAD(+) site. Positions 119 and 153 each coordinate substrate. His-177 functions as the Proton acceptor in the catalytic mechanism. Met-227 lines the NAD(+) pocket.

This sequence belongs to the LDH/MDH superfamily. MDH type 1 family. As to quaternary structure, homodimer.

The catalysed reaction is (S)-malate + NAD(+) = oxaloacetate + NADH + H(+). In terms of biological role, catalyzes the reversible oxidation of malate to oxaloacetate. This chain is Malate dehydrogenase, found in Serratia proteamaculans (strain 568).